Reading from the N-terminus, the 217-residue chain is Ribonuclease HII (217 aa).

Residues 27–216 (SRVAGVDEAG…VKESIQEGVC (190 aa)) enclose the RNase H type-2 domain. Positions 33, 34, and 126 each coordinate a divalent metal cation.

Belongs to the RNase HII family. Mn(2+) is required as a cofactor. Mg(2+) serves as cofactor.

The protein resides in the cytoplasm. The catalysed reaction is Endonucleolytic cleavage to 5'-phosphomonoester.. Its function is as follows. Endonuclease that specifically degrades the RNA of RNA-DNA hybrids. This Chlamydia trachomatis serovar A (strain ATCC VR-571B / DSM 19440 / HAR-13) protein is Ribonuclease HII.